A 314-amino-acid chain; its full sequence is Protein nutcracker (314 aa).

The disordered stretch occupies residues 1–62 (MSDTKSEIEG…PRLIQEKSTQ (62 aa)). The segment covering 21 to 34 (QQQQQPQQQQNEQQ) has biased composition (low complexity). The interval 257–314 (MQMEMKLQPSLLGLPDELYFEIFRYLDKSQLNVVARVNRHLHFYSKEVERKRLKGGRS) is required for interaction with skpA and Cul1, but not with PI31. The 46-residue stretch at 264-309 (QPSLLGLPDELYFEIFRYLDKSQLNVVARVNRHLHFYSKEVERKRL) folds into the F-box domain.

In terms of assembly, component of an SCF (SKP1-CUL1-F-box protein) E3 ubiquitin-protein ligase complex, at least composed of ntc, skpA and Cul1. Interacts (via F-box domain) with skpA and Cul1. Interacts with Prosalpha7 and PI31. Interacts with Bruce. Expressed in testis (at protein level).

It is found in the cytoplasm. Functions together with PI31 to control non-apoptotic caspase activation during sperm individualization. Positively regulates PI31 stability. The protein is Protein nutcracker of Drosophila melanogaster (Fruit fly).